Reading from the N-terminus, the 352-residue chain is Phosphoribosylformylglycinamidine cyclo-ligase (352 aa).

This sequence belongs to the AIR synthase family.

It localises to the cytoplasm. The enzyme catalyses 2-formamido-N(1)-(5-O-phospho-beta-D-ribosyl)acetamidine + ATP = 5-amino-1-(5-phospho-beta-D-ribosyl)imidazole + ADP + phosphate + H(+). It participates in purine metabolism; IMP biosynthesis via de novo pathway; 5-amino-1-(5-phospho-D-ribosyl)imidazole from N(2)-formyl-N(1)-(5-phospho-D-ribosyl)glycinamide: step 2/2. The protein is Phosphoribosylformylglycinamidine cyclo-ligase of Pseudomonas savastanoi pv. phaseolicola (strain 1448A / Race 6) (Pseudomonas syringae pv. phaseolicola (strain 1448A / Race 6)).